Consider the following 259-residue polypeptide: tRNA pseudouridine synthase A (259 aa).

Asp51 (nucleophile) is an active-site residue. Tyr109 lines the substrate pocket.

Belongs to the tRNA pseudouridine synthase TruA family. Homodimer.

It carries out the reaction uridine(38/39/40) in tRNA = pseudouridine(38/39/40) in tRNA. In terms of biological role, formation of pseudouridine at positions 38, 39 and 40 in the anticodon stem and loop of transfer RNAs. This chain is tRNA pseudouridine synthase A, found in Colwellia psychrerythraea (strain 34H / ATCC BAA-681) (Vibrio psychroerythus).